A 327-amino-acid chain; its full sequence is Lipoyl synthase (327 aa).

[4Fe-4S] cluster-binding residues include cysteine 74, cysteine 79, cysteine 85, cysteine 100, cysteine 104, cysteine 107, and serine 314. A Radical SAM core domain is found at 86 to 303; it reads FSGGTATFMI…AEEGEKMGFK (218 aa).

Belongs to the radical SAM superfamily. Lipoyl synthase family. Requires [4Fe-4S] cluster as cofactor.

It localises to the cytoplasm. The catalysed reaction is [[Fe-S] cluster scaffold protein carrying a second [4Fe-4S](2+) cluster] + N(6)-octanoyl-L-lysyl-[protein] + 2 oxidized [2Fe-2S]-[ferredoxin] + 2 S-adenosyl-L-methionine + 4 H(+) = [[Fe-S] cluster scaffold protein] + N(6)-[(R)-dihydrolipoyl]-L-lysyl-[protein] + 4 Fe(3+) + 2 hydrogen sulfide + 2 5'-deoxyadenosine + 2 L-methionine + 2 reduced [2Fe-2S]-[ferredoxin]. The protein operates within protein modification; protein lipoylation via endogenous pathway; protein N(6)-(lipoyl)lysine from octanoyl-[acyl-carrier-protein]: step 2/2. In terms of biological role, catalyzes the radical-mediated insertion of two sulfur atoms into the C-6 and C-8 positions of the octanoyl moiety bound to the lipoyl domains of lipoate-dependent enzymes, thereby converting the octanoylated domains into lipoylated derivatives. The polypeptide is Lipoyl synthase (Pseudomonas aeruginosa (strain LESB58)).